The following is a 231-amino-acid chain: Uracil phosphoribosyltransferase (231 aa).

38–42 (KGLVR) contacts GTP. 5-phospho-alpha-D-ribose 1-diphosphate contacts are provided by residues R87, R112, and 140–148 (DPMIATGST). Residues I203 and 208 to 210 (GDA) contribute to the uracil site. D209 contacts 5-phospho-alpha-D-ribose 1-diphosphate.

The protein belongs to the UPRTase family. Mg(2+) is required as a cofactor.

It carries out the reaction UMP + diphosphate = 5-phospho-alpha-D-ribose 1-diphosphate + uracil. Its pathway is pyrimidine metabolism; UMP biosynthesis via salvage pathway; UMP from uracil: step 1/1. Its activity is regulated as follows. Allosterically activated by GTP. Catalyzes the conversion of uracil and 5-phospho-alpha-D-ribose 1-diphosphate (PRPP) to UMP and diphosphate. This Methanococcus maripaludis (strain C7 / ATCC BAA-1331) protein is Uracil phosphoribosyltransferase.